The following is a 363-amino-acid chain: Ribosomal RNA large subunit methyltransferase M (363 aa).

S-adenosyl-L-methionine-binding positions include Ser-194, 227–230 (CPGG), Asp-246, Asp-266, and Asp-284. The active-site Proton acceptor is the Lys-313.

The protein belongs to the class I-like SAM-binding methyltransferase superfamily. RNA methyltransferase RlmE family. RlmM subfamily. In terms of assembly, monomer.

It localises to the cytoplasm. The enzyme catalyses cytidine(2498) in 23S rRNA + S-adenosyl-L-methionine = 2'-O-methylcytidine(2498) in 23S rRNA + S-adenosyl-L-homocysteine + H(+). Its function is as follows. Catalyzes the 2'-O-methylation at nucleotide C2498 in 23S rRNA. The polypeptide is Ribosomal RNA large subunit methyltransferase M (Haemophilus influenzae (strain 86-028NP)).